The chain runs to 118 residues: MLIPKEDRKKIHQYLFQEGVVVAKKDFNQPKHDEIDTRNLFVIKALQSLTSKGYVKTQFSWQYYYYTLTDEGVEFLRTELNIPEGILPLTRLKNAPAERPRPSRGGPRRGGYRGRARD.

The segment at 91-118 is disordered; that stretch reads RLKNAPAERPRPSRGGPRRGGYRGRARD. Basic residues predominate over residues 106-118; the sequence is GPRRGGYRGRARD.

It belongs to the eukaryotic ribosomal protein eS10 family. Component of the small ribosomal subunit. Mature ribosomes consist of a small (40S) and a large (60S) subunit. The 40S subunit contains about 32 different proteins and 1 molecule of RNA (18S). The 60S subunit contains 45 different proteins and 3 molecules of RNA (25S, 5.8S and 5S).

The protein localises to the cytoplasm. In terms of biological role, component of the ribosome, a large ribonucleoprotein complex responsible for the synthesis of proteins in the cell. The small ribosomal subunit (SSU) binds messenger RNAs (mRNAs) and translates the encoded message by selecting cognate aminoacyl-transfer RNA (tRNA) molecules. The large subunit (LSU) contains the ribosomal catalytic site termed the peptidyl transferase center (PTC), which catalyzes the formation of peptide bonds, thereby polymerizing the amino acids delivered by tRNAs into a polypeptide chain. The nascent polypeptides leave the ribosome through a tunnel in the LSU and interact with protein factors that function in enzymatic processing, targeting, and the membrane insertion of nascent chains at the exit of the ribosomal tunnel. The protein is Small ribosomal subunit protein eS10 (RPS10) of Candida albicans (strain SC5314 / ATCC MYA-2876) (Yeast).